A 189-amino-acid polypeptide reads, in one-letter code: Prophage DNA-packing protein NohA (189 aa).

It belongs to the terminase small subunit family.

The protein is Prophage DNA-packing protein NohA (nohA) of Escherichia coli (strain K12).